The primary structure comprises 238 residues: Valine-rich protein (238 aa).

Positions 1–16 (MQAVLLVVALFGAALA) are cleaved as a signal peptide.

In terms of tissue distribution, prismatic layer of shell (at protein level). Expressed primarily in the mantle with highest level in the mantle edge and lower level in the mantle pallium.

It localises to the secreted. The protein is Valine-rich protein of Margaritifera margaritifera (Freshwater pearl mussel).